The primary structure comprises 117 residues: Putative hydrolase fragment YghX (117 aa).

Positions 91 to 117 are disordered; the sequence is DGLSSVGGYPGNDDKGRELQQQVDPTN.

This Escherichia coli (strain K12) protein is Putative hydrolase fragment YghX (yghX).